A 94-amino-acid chain; its full sequence is Small ribosomal subunit protein bS6 (94 aa).

It belongs to the bacterial ribosomal protein bS6 family.

In terms of biological role, binds together with bS18 to 16S ribosomal RNA. The chain is Small ribosomal subunit protein bS6 from Phytoplasma mali (strain AT).